The chain runs to 410 residues: MQFSSSIRQFLDKKRIVEFTKIQQAVFKLWPFQNIIGIAETGSGKTFAYLLPLLDKINTSLDQPQAVIFVPTKELQWQIINILTEIKKYFKTFTFATSFSSKAQLIVSLLNEKYLFTSKVRYVVFDEIDMFLEQSSIQQWLECVHLFQKAKPLFAFFSATLFNQQLQIIKKQVINTKVINLHPKQWIHPLVKHFVVHLNTENRFSGLLALLKHHQNQQIIVFCSNQKSLKQLTQLLSNNNISFGSIYGSLTYQERKNNFTKATNNKLKLLVVSDLFSRGIDLNYFSVVISWDLPKIDSFYIHRSGRVARLNSWGRSYLFWNDQNQSKLNKLIAKGIKFQNVSLTSNGDLKFLTENNQKTTKKPLSTLQIKKIKAIKAKYKKVKPNYKKYQKQQIQNLLINKKKPRSWKNF.

The Helicase ATP-binding domain maps to 26-179; it reads VFKLWPFQNI…KKQVINTKVI (154 aa). 39 to 46 is an ATP binding site; sequence AETGSGKT. The DEID box motif lies at 126–129; sequence DEID. Residues 190–357 form the Helicase C-terminal domain; the sequence is LVKHFVVHLN…DLKFLTENNQ (168 aa).

It belongs to the DEAD box helicase family.

The catalysed reaction is ATP + H2O = ADP + phosphate + H(+). This Mycoplasma genitalium (strain ATCC 33530 / DSM 19775 / NCTC 10195 / G37) (Mycoplasmoides genitalium) protein is Probable ATP-dependent RNA helicase MG308.